Consider the following 312-residue polypeptide: Elongation factor Ts (312 aa).

Positions 80 to 83 are involved in Mg(2+) ion dislocation from EF-Tu; the sequence is TDFV.

It belongs to the EF-Ts family.

It localises to the cytoplasm. Associates with the EF-Tu.GDP complex and induces the exchange of GDP to GTP. It remains bound to the aminoacyl-tRNA.EF-Tu.GTP complex up to the GTP hydrolysis stage on the ribosome. The polypeptide is Elongation factor Ts (Maricaulis maris (strain MCS10) (Caulobacter maris)).